A 673-amino-acid chain; its full sequence is UvrABC system protein B (673 aa).

Positions 26 to 183 (EGLEDGLAHQ…RRLAELQYTR (158 aa)) constitute a Helicase ATP-binding domain. An ATP-binding site is contributed by 39 to 46 (GVTGSGKT). Positions 92–115 (YYDYYQPEAYVPSSDTFIEKDASV) match the Beta-hairpin motif. The region spanning 431–597 (QVDDLLSEIR…GLNKKVVDIL (167 aa)) is the Helicase C-terminal domain. Positions 608–627 (AKGRGKSRPIVEPDNVPMDM) are disordered. The UVR domain maps to 633–668 (QQKIHELEGLMMQHAQNLEFEEAAQIRDQLHQLREL).

This sequence belongs to the UvrB family. As to quaternary structure, forms a heterotetramer with UvrA during the search for lesions. Interacts with UvrC in an incision complex.

The protein localises to the cytoplasm. The UvrABC repair system catalyzes the recognition and processing of DNA lesions. A damage recognition complex composed of 2 UvrA and 2 UvrB subunits scans DNA for abnormalities. Upon binding of the UvrA(2)B(2) complex to a putative damaged site, the DNA wraps around one UvrB monomer. DNA wrap is dependent on ATP binding by UvrB and probably causes local melting of the DNA helix, facilitating insertion of UvrB beta-hairpin between the DNA strands. Then UvrB probes one DNA strand for the presence of a lesion. If a lesion is found the UvrA subunits dissociate and the UvrB-DNA preincision complex is formed. This complex is subsequently bound by UvrC and the second UvrB is released. If no lesion is found, the DNA wraps around the other UvrB subunit that will check the other stand for damage. In Escherichia fergusonii (strain ATCC 35469 / DSM 13698 / CCUG 18766 / IAM 14443 / JCM 21226 / LMG 7866 / NBRC 102419 / NCTC 12128 / CDC 0568-73), this protein is UvrABC system protein B.